The following is an 867-amino-acid chain: Alanine--tRNA ligase (867 aa).

Residues histidine 556, histidine 560, cysteine 658, and histidine 662 each coordinate Zn(2+).

Belongs to the class-II aminoacyl-tRNA synthetase family. Requires Zn(2+) as cofactor.

It is found in the cytoplasm. The catalysed reaction is tRNA(Ala) + L-alanine + ATP = L-alanyl-tRNA(Ala) + AMP + diphosphate. Catalyzes the attachment of alanine to tRNA(Ala) in a two-step reaction: alanine is first activated by ATP to form Ala-AMP and then transferred to the acceptor end of tRNA(Ala). Also edits incorrectly charged Ser-tRNA(Ala) and Gly-tRNA(Ala) via its editing domain. The protein is Alanine--tRNA ligase of Fusobacterium nucleatum subsp. nucleatum (strain ATCC 25586 / DSM 15643 / BCRC 10681 / CIP 101130 / JCM 8532 / KCTC 2640 / LMG 13131 / VPI 4355).